Here is a 278-residue protein sequence, read N- to C-terminus: Digeranylgeranylglyceryl phosphate synthase (278 aa).

Helical transmembrane passes span 12–32, 34–54, 92–112, 129–149, 199–219, 221–241, and 257–277; these read LKNCLTAGFGALISGLIASNF, FGALFPLILAFLVVFFICGFG, IMIFGLIISLFNIYCFLMAVL, IIGNMLVAYLTGSVFIFGGIA, IYISLGLLLIAIGLSFLPYLT, IFGIYYLLMILICNLMFLAGF, and SKNIKLITNFVLIAFIIGSIF.

It belongs to the UbiA prenyltransferase family. DGGGP synthase subfamily. It depends on Mg(2+) as a cofactor.

It is found in the cell membrane. It catalyses the reaction sn-3-O-(geranylgeranyl)glycerol 1-phosphate + (2E,6E,10E)-geranylgeranyl diphosphate = 2,3-bis-O-(geranylgeranyl)-sn-glycerol 1-phosphate + diphosphate. The protein operates within membrane lipid metabolism; glycerophospholipid metabolism. Prenyltransferase that catalyzes the transfer of the geranylgeranyl moiety of geranylgeranyl diphosphate (GGPP) to the C2 hydroxyl of (S)-3-O-geranylgeranylglyceryl phosphate (GGGP). This reaction is the second ether-bond-formation step in the biosynthesis of archaeal membrane lipids. The chain is Digeranylgeranylglyceryl phosphate synthase from Methanococcus vannielii (strain ATCC 35089 / DSM 1224 / JCM 13029 / OCM 148 / SB).